The primary structure comprises 406 residues: Homocitrate synthase AksA (406 aa).

One can recognise a Pyruvate carboxyltransferase domain in the interval I32 to P285.

It belongs to the alpha-IPM synthase/homocitrate synthase family.

The catalysed reaction is acetyl-CoA + 2-oxoglutarate + H2O = (2R)-homocitrate + CoA + H(+). It carries out the reaction 2-oxoadipate + acetyl-CoA + H2O = (R)-dihomocitrate + CoA + H(+). It catalyses the reaction 2-oxoheptanedioate + acetyl-CoA + H2O = (R)-trihomocitrate + CoA + H(+). It participates in organic acid metabolism; 2-oxosuberate biosynthesis. Functionally, catalyzes the condensation of alpha-ketoglutarate and acetyl-CoA to form (R)-homocitrate. Can also catalyze the condensation of alpha-ketoadipate with acetyl-CoA to form (R)-homo(2)citrate, and the condensation of alpha-ketopimelate with acetyl-CoA to form (R)-homo(3)citrate. These reactions are part of the biosynthesis pathway of coenzyme B and biotin. The protein is Homocitrate synthase AksA (aksA) of Methanocaldococcus jannaschii (strain ATCC 43067 / DSM 2661 / JAL-1 / JCM 10045 / NBRC 100440) (Methanococcus jannaschii).